Consider the following 233-residue polypeptide: Large ribosomal subunit protein uL1 (233 aa).

Belongs to the universal ribosomal protein uL1 family. As to quaternary structure, part of the 50S ribosomal subunit.

Its function is as follows. Binds directly to 23S rRNA. The L1 stalk is quite mobile in the ribosome, and is involved in E site tRNA release. In terms of biological role, protein L1 is also a translational repressor protein, it controls the translation of the L11 operon by binding to its mRNA. The polypeptide is Large ribosomal subunit protein uL1 (Buchnera aphidicola subsp. Baizongia pistaciae (strain Bp)).